Consider the following 251-residue polypeptide: Flap endonuclease Xni (251 aa).

Asp-104 is a Mg(2+) binding site. The 5'-3' exonuclease domain maps to 160–250 (VLPRQLPDYW…SGNLQQLRLK (91 aa)). Positions 171, 172, 180, 182, and 185 each coordinate K(+). The interaction with DNA stretch occupies residues 184-189 (GVGAKT).

It belongs to the Xni family. Requires Mg(2+) as cofactor. K(+) is required as a cofactor.

Has flap endonuclease activity. During DNA replication, flap endonucleases cleave the 5'-overhanging flap structure that is generated by displacement synthesis when DNA polymerase encounters the 5'-end of a downstream Okazaki fragment. The chain is Flap endonuclease Xni from Yersinia pestis bv. Antiqua (strain Nepal516).